A 100-amino-acid polypeptide reads, in one-letter code: Urease subunit gamma (100 aa).

The protein belongs to the urease gamma subunit family. In terms of assembly, heterotrimer of UreA (gamma), UreB (beta) and UreC (alpha) subunits. Three heterotrimers associate to form the active enzyme.

The protein localises to the cytoplasm. The enzyme catalyses urea + 2 H2O + H(+) = hydrogencarbonate + 2 NH4(+). It functions in the pathway nitrogen metabolism; urea degradation; CO(2) and NH(3) from urea (urease route): step 1/1. The sequence is that of Urease subunit gamma from Blochmanniella floridana.